Here is a 448-residue protein sequence, read N- to C-terminus: Antizyme inhibitor 1 (448 aa).

Belongs to the Orn/Lys/Arg decarboxylase class-II family. ODC antizyme inhibitor subfamily. In terms of assembly, monomer. Interacts with OAZ1 and OAZ3; this interaction disrupts the interaction between the antizyme and ODC1. Post-translationally, ubiquitinated, leading to its proteasomal degradation; a process that is reduced in presence of antizyme OAZ1.

Its subcellular location is the nucleus. Functionally, antizyme inhibitor (AZI) protein that positively regulates ornithine decarboxylase (ODC) activity and polyamine uptake. AZI is an enzymatically inactive ODC homolog that counteracts the negative effect of ODC antizymes (AZs) OAZ1, OAZ2 and OAZ3 on ODC activity by competing with ODC for antizyme-binding. Inhibits antizyme-dependent ODC degradation and releases ODC monomers from their inactive complex with antizymes, leading to formation of the catalytically active ODC homodimer and restoring polyamine production. This is Antizyme inhibitor 1 (AZIN1) from Pongo abelii (Sumatran orangutan).